A 406-amino-acid polypeptide reads, in one-letter code: Eukaryotic initiation factor 4A-I (406 aa).

The interval 1 to 21 (MSASQDSRSRDNGPDGMEPEG) is disordered. Position 2 is an N-acetylserine (Ser-2). Ser-4 carries the post-translational modification Phosphoserine. The Q motif signature appears at 32–60 (DSFDDMNLSESLLRGIYAYGFEKPSAIQQ). The Helicase ATP-binding domain occupies 63–234 (ILPCIKGYDV…KKFMRDPIRI (172 aa)). Position 76 to 83 (76 to 83 (AQSGTGKT)) interacts with ATP. The residue at position 118 (Lys-118) is an N6-acetyllysine. A Glycyl lysine isopeptide (Lys-Gly) (interchain with G-Cter in SUMO2) cross-link involves residue Lys-146. Residue Thr-158 is modified to Phosphothreonine. Lys-174 carries the post-translational modification N6-acetyllysine. Positions 182–185 (DEAD) match the DEAD box motif. At Lys-193 the chain carries N6-acetyllysine. A Glycyl lysine isopeptide (Lys-Gly) (interchain with G-Cter in SUMO2) cross-link involves residue Lys-225. Lys-238 is modified (N6-acetyllysine; alternate). A Glycyl lysine isopeptide (Lys-Gly) (interchain with G-Cter in SUMO2); alternate cross-link involves residue Lys-238. Positions 245–406 (GIRQFYINVE…EMPLNVADLI (162 aa)) constitute a Helicase C-terminal domain. Residues Lys-309, Lys-369, and Lys-381 each participate in a glycyl lysine isopeptide (Lys-Gly) (interchain with G-Cter in SUMO2) cross-link.

Belongs to the DEAD box helicase family. eIF4A subfamily. As to quaternary structure, eIF4F is a multi-subunit complex, the composition of which varies with external and internal environmental conditions. It is composed of at least EIF4A, EIF4E and EIF4G1/EIF4G3. Interacts with PAIP1, EIF4E and UPF2. Found in a complex with XPO7, EIF4A1, ARHGAP1, VPS26A, VPS29, VPS35 and SFN. May interact with NOM1. Interacts with PDCD4; this interferes with the interaction between EIF4A and EIF4G. Interacts with RBM4. Interacts with DDX3X in an RNA-independent manner. Interacts with PKP1 (via N-terminus); the interaction promotes EIF4A1 recruitment to the cap-dependent translation complex and EIF4A1 ATPase activity.

The protein localises to the cytoplasm. The protein resides in the perinuclear region. It is found in the cell membrane. Its subcellular location is the stress granule. It catalyses the reaction ATP + H2O = ADP + phosphate + H(+). In terms of biological role, ATP-dependent RNA helicase which is a subunit of the eIF4F complex involved in cap recognition and is required for mRNA binding to ribosome. In the current model of translation initiation, eIF4A unwinds RNA secondary structures in the 5'-UTR of mRNAs which is necessary to allow efficient binding of the small ribosomal subunit, and subsequent scanning for the initiator codon. As a result, promotes cell proliferation and growth. This is Eukaryotic initiation factor 4A-I (EIF4A1) from Macaca fascicularis (Crab-eating macaque).